The chain runs to 333 residues: Thiamine-monophosphate kinase (333 aa).

Positions 44, 58, 59, and 60 each coordinate Mg(2+). Residue H67 participates in substrate binding. The Mg(2+) site is built by D89 and D137. ATP is bound by residues 136 to 137 (GD) and R162. D224 serves as a coordination point for Mg(2+). S226 is an ATP binding site. Mg(2+) is bound at residue D227. Substrate contacts are provided by E278 and W320.

It belongs to the thiamine-monophosphate kinase family.

The enzyme catalyses thiamine phosphate + ATP = thiamine diphosphate + ADP. It functions in the pathway cofactor biosynthesis; thiamine diphosphate biosynthesis; thiamine diphosphate from thiamine phosphate: step 1/1. Its function is as follows. Catalyzes the ATP-dependent phosphorylation of thiamine-monophosphate (TMP) to form thiamine-pyrophosphate (TPP), the active form of vitamin B1. The sequence is that of Thiamine-monophosphate kinase from Mycobacterium tuberculosis (strain CDC 1551 / Oshkosh).